We begin with the raw amino-acid sequence, 104 residues long: UPF0473 protein SH1304 (104 aa).

The protein belongs to the UPF0473 family.

In Staphylococcus haemolyticus (strain JCSC1435), this protein is UPF0473 protein SH1304.